Consider the following 198-residue polypeptide: Recombination protein RecR (198 aa).

The segment at cysteine 57–cysteine 72 adopts a C4-type zinc-finger fold. One can recognise a Toprim domain in the interval threonine 80–alanine 175.

Belongs to the RecR family.

Its function is as follows. May play a role in DNA repair. It seems to be involved in an RecBC-independent recombinational process of DNA repair. It may act with RecF and RecO. The protein is Recombination protein RecR of Lactococcus lactis subsp. lactis (strain IL1403) (Streptococcus lactis).